The following is a 446-amino-acid chain: Chromosomal replication initiator protein DnaA (446 aa).

A domain I, interacts with DnaA modulators region spans residues 1–72 (MENILDLWNQ…ADTIYELTGE (72 aa)). A domain II region spans residues 72-109 (EELSVKFVIPQNQDEENFLPKPQVKKAAKEEPSDFPQS). The segment at 110-326 (MLNPKYTFDT…GALIRVVAYS (217 aa)) is domain III, AAA+ region. 4 residues coordinate ATP: Gly-154, Gly-156, Lys-157, and Thr-158. The tract at residues 327-446 (SLINKDINAD…QVKEIKELLK (120 aa)) is domain IV, binds dsDNA.

The protein belongs to the DnaA family. Oligomerizes as a right-handed, spiral filament on DNA at oriC.

It localises to the cytoplasm. In terms of biological role, plays an essential role in the initiation and regulation of chromosomal replication. ATP-DnaA binds to the origin of replication (oriC) to initiate formation of the DNA replication initiation complex once per cell cycle. Binds the DnaA box (a 9 base pair repeat at the origin) and separates the double-stranded (ds)DNA. Forms a right-handed helical filament on oriC DNA; dsDNA binds to the exterior of the filament while single-stranded (ss)DNA is stabiized in the filament's interior. The ATP-DnaA-oriC complex binds and stabilizes one strand of the AT-rich DNA unwinding element (DUE), permitting loading of DNA polymerase. After initiation quickly degrades to an ADP-DnaA complex that is not apt for DNA replication. Binds acidic phospholipids. The sequence is that of Chromosomal replication initiator protein DnaA from Bacillus velezensis (strain DSM 23117 / BGSC 10A6 / LMG 26770 / FZB42) (Bacillus amyloliquefaciens subsp. plantarum).